The primary structure comprises 273 residues: NH(3)-dependent NAD(+) synthetase (273 aa).

34 to 41 lines the ATP pocket; sequence GLSGGIDS. Asp-40 provides a ligand contact to Mg(2+). Arg-116 is a deamido-NAD(+) binding site. ATP is bound at residue Thr-136. Glu-141 is a Mg(2+) binding site. Positions 165 and 187 each coordinate ATP.

Belongs to the NAD synthetase family. Homodimer.

The catalysed reaction is deamido-NAD(+) + NH4(+) + ATP = AMP + diphosphate + NAD(+) + H(+). It participates in cofactor biosynthesis; NAD(+) biosynthesis; NAD(+) from deamido-NAD(+) (ammonia route): step 1/1. Functionally, catalyzes the ATP-dependent amidation of deamido-NAD to form NAD. Uses ammonia as a nitrogen source. The sequence is that of NH(3)-dependent NAD(+) synthetase from Trichlorobacter lovleyi (strain ATCC BAA-1151 / DSM 17278 / SZ) (Geobacter lovleyi).